A 224-amino-acid polypeptide reads, in one-letter code: Peroxynitrite isomerase 2 (224 aa).

The GXWXGXG signature appears at 71–77; the sequence is GVWRGEG. The heme b site is built by K187 and H214.

This sequence belongs to the nitrobindin family. As to quaternary structure, homodimer. Requires heme b as cofactor.

The enzyme catalyses peroxynitrite = nitrate. It functions in the pathway nitrogen metabolism. Its function is as follows. Heme-binding protein able to scavenge peroxynitrite and to protect free L-tyrosine against peroxynitrite-mediated nitration, by acting as a peroxynitrite isomerase that converts peroxynitrite to nitrate. Therefore, this protein likely plays a role in peroxynitrite sensing and in the detoxification of reactive nitrogen and oxygen species (RNS and ROS, respectively). Is able to bind nitric oxide (NO) in vitro, but may act as a sensor of peroxynitrite levels in vivo. This is Peroxynitrite isomerase 2 from Mycobacterium sp. (strain JLS).